Here is a 116-residue protein sequence, read N- to C-terminus: Phosphoribosyl-AMP cyclohydrolase (116 aa).

Asp85 contributes to the Mg(2+) binding site. Cys86 is a Zn(2+) binding site. The Mg(2+) site is built by Asp87 and Asp89. Zn(2+)-binding residues include Cys102 and Cys109.

The protein belongs to the PRA-CH family. As to quaternary structure, homodimer. The cofactor is Mg(2+). Zn(2+) serves as cofactor.

It is found in the cytoplasm. It carries out the reaction 1-(5-phospho-beta-D-ribosyl)-5'-AMP + H2O = 1-(5-phospho-beta-D-ribosyl)-5-[(5-phospho-beta-D-ribosylamino)methylideneamino]imidazole-4-carboxamide. It participates in amino-acid biosynthesis; L-histidine biosynthesis; L-histidine from 5-phospho-alpha-D-ribose 1-diphosphate: step 3/9. In terms of biological role, catalyzes the hydrolysis of the adenine ring of phosphoribosyl-AMP. This Corynebacterium diphtheriae (strain ATCC 700971 / NCTC 13129 / Biotype gravis) protein is Phosphoribosyl-AMP cyclohydrolase.